The chain runs to 240 residues: Ribosomal RNA large subunit methyltransferase E (240 aa).

The interval 1–28 (MSSSPRSPDARPLKVRVKSARTRSSSSQ) is disordered. The S-adenosyl-L-methionine site is built by Gly80, Trp82, Asp103, Asp119, and Asp143. Lys183 acts as the Proton acceptor in catalysis.

Belongs to the class I-like SAM-binding methyltransferase superfamily. RNA methyltransferase RlmE family.

The protein localises to the cytoplasm. The enzyme catalyses uridine(2552) in 23S rRNA + S-adenosyl-L-methionine = 2'-O-methyluridine(2552) in 23S rRNA + S-adenosyl-L-homocysteine + H(+). Its function is as follows. Specifically methylates the uridine in position 2552 of 23S rRNA at the 2'-O position of the ribose in the fully assembled 50S ribosomal subunit. The sequence is that of Ribosomal RNA large subunit methyltransferase E from Azorhizobium caulinodans (strain ATCC 43989 / DSM 5975 / JCM 20966 / LMG 6465 / NBRC 14845 / NCIMB 13405 / ORS 571).